The chain runs to 207 residues: Small ribosomal subunit protein uS4c (207 aa).

The S4 RNA-binding domain maps to 92-156; that stretch reads MRLDNILFRL…YQSIITKRIE (65 aa).

Belongs to the universal ribosomal protein uS4 family. In terms of assembly, part of the 30S ribosomal subunit. Contacts protein S5. The interaction surface between S4 and S5 is involved in control of translational fidelity.

The protein localises to the plastid. It is found in the chloroplast. Functionally, one of the primary rRNA binding proteins, it binds directly to 16S rRNA where it nucleates assembly of the body of the 30S subunit. Its function is as follows. With S5 and S12 plays an important role in translational accuracy. The sequence is that of Small ribosomal subunit protein uS4c (rps4) from Equisetum sylvaticum (Wood horsetail).